The sequence spans 281 residues: MTTSVLVPSSLAREAEDRREATRKLGYVARAAAVYRVDRLTVYPDPDGAGKWEDGFVETVLRYAATPPHLRKEMWGKRDELEYVGVLPPLRVRSQTGSGSEGSGSLRQGIVTEVGADGRVRVNCGMQHPISLPVPADMDVEQGERVTVRVSSRRPVRAKLVDAPTTGFDVVAADLDAALSRDDAGLTIASSRYGEPVTSTRLGQLAERRDAEGGMTVAFGAPERGLPSILDVAPDAVGGDQTSDEPEGFDLWLNTVPNQGSEVVRTEEALFASLTCLTLTE.

This is an uncharacterized protein from Haloarcula marismortui (strain ATCC 43049 / DSM 3752 / JCM 8966 / VKM B-1809) (Halobacterium marismortui).